The primary structure comprises 129 residues: Small ribosomal subunit protein uS9 (129 aa).

Positions 98–129 (KAQGFLTRDPRKKERKKYGRKKARKSFQFSKR) are disordered. Over residues 110 to 129 (KERKKYGRKKARKSFQFSKR) the composition is skewed to basic residues.

This sequence belongs to the universal ribosomal protein uS9 family.

This is Small ribosomal subunit protein uS9 from Chlamydia trachomatis serovar L2 (strain ATCC VR-902B / DSM 19102 / 434/Bu).